Here is a 314-residue protein sequence, read N- to C-terminus: DNA-directed RNA polymerase subunit alpha (314 aa).

Residues 1 to 228 (MIEIEKPKIE…EHLNIFVGLT (228 aa)) form an alpha N-terminal domain (alpha-NTD) region. Positions 245–314 (KEKVMEMTIE…DLGLGLRDDD (70 aa)) are alpha C-terminal domain (alpha-CTD).

This sequence belongs to the RNA polymerase alpha chain family. As to quaternary structure, homodimer. The RNAP catalytic core consists of 2 alpha, 1 beta, 1 beta' and 1 omega subunit. When a sigma factor is associated with the core the holoenzyme is formed, which can initiate transcription.

The enzyme catalyses RNA(n) + a ribonucleoside 5'-triphosphate = RNA(n+1) + diphosphate. In terms of biological role, DNA-dependent RNA polymerase catalyzes the transcription of DNA into RNA using the four ribonucleoside triphosphates as substrates. This chain is DNA-directed RNA polymerase subunit alpha, found in Oceanobacillus iheyensis (strain DSM 14371 / CIP 107618 / JCM 11309 / KCTC 3954 / HTE831).